Consider the following 352-residue polypeptide: Phenylalanine--tRNA ligase alpha subunit (352 aa).

Residue Glu258 coordinates Mg(2+).

It belongs to the class-II aminoacyl-tRNA synthetase family. Phe-tRNA synthetase alpha subunit type 1 subfamily. Tetramer of two alpha and two beta subunits. The cofactor is Mg(2+).

Its subcellular location is the cytoplasm. The enzyme catalyses tRNA(Phe) + L-phenylalanine + ATP = L-phenylalanyl-tRNA(Phe) + AMP + diphosphate + H(+). The protein is Phenylalanine--tRNA ligase alpha subunit of Staphylococcus aureus (strain NCTC 8325 / PS 47).